The sequence spans 226 residues: Ribonuclease T (226 aa).

The region spanning 20–194 (VVIDVETAGF…YDTERTAELF (175 aa)) is the Exonuclease domain. D23, E25, H181, and D186 together coordinate Mg(2+). H181 functions as the Proton donor/acceptor in the catalytic mechanism.

Belongs to the RNase T family. As to quaternary structure, homodimer. Requires Mg(2+) as cofactor.

Trims short 3' overhangs of a variety of RNA species, leaving a one or two nucleotide 3' overhang. Responsible for the end-turnover of tRNA: specifically removes the terminal AMP residue from uncharged tRNA (tRNA-C-C-A). Also appears to be involved in tRNA biosynthesis. The chain is Ribonuclease T from Shewanella denitrificans (strain OS217 / ATCC BAA-1090 / DSM 15013).